Here is a 238-residue protein sequence, read N- to C-terminus: Flagellar L-ring protein (238 aa).

The N-terminal stretch at 1 to 16 is a signal peptide; the sequence is MRKLILISLCIFFLAS. Cysteine 17 is lipidated: N-palmitoyl cysteine. The S-diacylglycerol cysteine moiety is linked to residue cysteine 17.

Belongs to the FlgH family. The basal body constitutes a major portion of the flagellar organelle and consists of four rings (L,P,S, and M) mounted on a central rod.

The protein resides in the cell outer membrane. It is found in the bacterial flagellum basal body. Its function is as follows. Assembles around the rod to form the L-ring and probably protects the motor/basal body from shearing forces during rotation. This chain is Flagellar L-ring protein, found in Thermodesulfovibrio yellowstonii (strain ATCC 51303 / DSM 11347 / YP87).